Here is a 185-residue protein sequence, read N- to C-terminus: Protein FAM219A (185 aa).

At M1 the chain carries N-acetylmethionine. Residues 1–131 form a disordered region; sequence MMEEIDRFQV…SRYSSSGYSS (131 aa). Position 47 is a phosphoserine (S47). Positions 52–61 are enriched in basic and acidic residues; it reads KLEKQRELAR. Polar residues predominate over residues 66–80; the sequence is KNGSMGSPVNQQPKK. 2 positions are modified to phosphoserine: S72 and S102. T113 is subject to Phosphothreonine. 2 positions are modified to phosphoserine: S115 and S122. A compositionally biased stretch (low complexity) spans 122–131; it reads SRYSSSGYSS.

Belongs to the FAM219 family.

The chain is Protein FAM219A (FAM219A) from Homo sapiens (Human).